The sequence spans 708 residues: Kin of IRRE-like protein 2 (708 aa).

The first 20 residues, Met1 to Ala20, serve as a signal peptide directing secretion. Topologically, residues Gly21 to Arg510 are extracellular. Ig-like C2-type domains follow at residues Pro24–His118, Pro123–Ser222, Pro227–Asp307, Pro312–Thr394, and Pro398–Gly501. A disulfide bond links Cys45 and Cys103. Residue Asn143 is glycosylated (N-linked (GlcNAc...) asparagine). Disulfide bonds link Cys146/Cys204 and Cys248/Cys291. A Cell attachment site motif is present at residues Arg149–Asp151. Asn301 is a glycosylation site (N-linked (GlcNAc...) asparagine). Disulfide bonds link Cys333–Cys375 and Cys419–Cys485. An N-linked (GlcNAc...) asparagine glycan is attached at Asn484. A helical transmembrane segment spans residues Ile511 to Leu531. Topologically, residues Cys532 to Val708 are cytoplasmic. Positions Glu545–Asn601 are disordered. Residues Pro553–Arg562 are compositionally biased toward low complexity. The segment covering Thr569 to Leu586 has biased composition (basic and acidic residues). Ser571 carries the post-translational modification Phosphoserine. Phosphotyrosine is present on residues Tyr603, Tyr604, and Tyr661. The segment at Leu684 to Val708 is disordered.

Belongs to the immunoglobulin superfamily. In terms of assembly, homodimer. Interacts with NPHS2/podocin (via the C-terminus). Interacts with NPHS1 (via the Ig-like domains). Interacts with FYN. Post-translationally, N-glycosylated. In terms of processing, the extracellular domain is cleaved leading to the generation of a soluble fragment and a membrane-bound C-terminal fragment, which is further cleaved by gamma-secretase. As to expression, highly expressed in beta-cells of the pancreatic islets.

Its subcellular location is the cell membrane. Functionally, may regulate basal insulin secretion. In Homo sapiens (Human), this protein is Kin of IRRE-like protein 2 (KIRREL2).